A 341-amino-acid polypeptide reads, in one-letter code: Glyceraldehyde-3-phosphate dehydrogenase (341 aa).

NAD(+)-binding positions include 11–12 (TI) and G109. 138 to 140 (SCN) contributes to the D-glyceraldehyde 3-phosphate binding site. C139 serves as the catalytic Nucleophile. R167 is an NAD(+) binding site. Residues T169 and 192–193 (HA) contribute to the D-glyceraldehyde 3-phosphate site. Q299 contacts NAD(+).

It belongs to the glyceraldehyde-3-phosphate dehydrogenase family. In terms of assembly, homotetramer.

Its subcellular location is the cytoplasm. It catalyses the reaction D-glyceraldehyde 3-phosphate + phosphate + NADP(+) = (2R)-3-phospho-glyceroyl phosphate + NADPH + H(+). The enzyme catalyses D-glyceraldehyde 3-phosphate + phosphate + NAD(+) = (2R)-3-phospho-glyceroyl phosphate + NADH + H(+). The protein operates within carbohydrate degradation; glycolysis; pyruvate from D-glyceraldehyde 3-phosphate: step 1/5. This chain is Glyceraldehyde-3-phosphate dehydrogenase, found in Picrophilus torridus (strain ATCC 700027 / DSM 9790 / JCM 10055 / NBRC 100828 / KAW 2/3).